Consider the following 250-residue polypeptide: MTVYFIGAGPGDPDLITVKGQRLIRQCPVILYAGSLVPQALLEGHQAGQVVNTAELDLEQIVELLAQAHRRGLDVARVHSGDPSLYGAIGEQIRHLRELGIPYEIVPGVTATAACAALLGCELTLPEVSQTLILTRYAARTKMPEGESLGDLARHRATLAIHLGVAHLAKIVEELLPHYGADCPVAVIHRASWPDQEQVRGTLGDILPKVAARNFRRTALILVGEVLAAEGFADSSLYRAEHRHLYRPGE.

This sequence belongs to the precorrin methyltransferase family.

It catalyses the reaction precorrin-4 + S-adenosyl-L-methionine = precorrin-5 + S-adenosyl-L-homocysteine. Its pathway is cofactor biosynthesis; adenosylcobalamin biosynthesis; cob(II)yrinate a,c-diamide from precorrin-2 (aerobic route): step 4/10. Its function is as follows. Catalyzes the methylation of C-11 in precorrin-4 to form precorrin-5. This is Precorrin-4 C(11)-methyltransferase (cobM) from Pseudomonas aeruginosa (strain ATCC 15692 / DSM 22644 / CIP 104116 / JCM 14847 / LMG 12228 / 1C / PRS 101 / PAO1).